Here is a 480-residue protein sequence, read N- to C-terminus: MSSNRVLDLFKPFESFLPEVIAPERKVPYNQKLIWTGVSLLIFLILGQIPLYGIVSSETSDPLYWLRAMLASNRGTLLELGVSPIITSSMIFQFLQGTQLLQIRPESKQDRELFQIAQKVCAIILILGQALVVVMTGNYGAPSDLGLPICLLLIFQLMFASLIVMLLDELLSKGYGLGSGISLFTATNIAEQIFWRAFAPTTVNSGRGKEFEGAVIAFFHLLAVRKDKKRALVEAFYRTNLPNMFQVLMTVAIFLFVLYLQGFRYELPIRSTKVRGQIGIYPIKLFYTSNTPIMLQSALTSNIFLISQILFQKYPTNPLIRLIGVWGIRPGTQGPQMALSGLAYYIQPLMSLSEALLDPIKTIVYITFVLGSCAVFSKTWIEISGTSPRDIAKQFKDQGMVINGKRETSIYRELKKIIPTAAAFGGATIGALSVGSDLLGTLGSGASILMATTTIYGYYEAAAKEGGFTKNLVPGFSDLM.

Over 1 to 32 (MSSNRVLDLFKPFESFLPEVIAPERKVPYNQK) the chain is Cytoplasmic. The helical transmembrane segment at 33 to 55 (LIWTGVSLLIFLILGQIPLYGIV) threads the bilayer. Residues 56 to 75 (SSETSDPLYWLRAMLASNRG) lie on the Lumenal side of the membrane. Residues 76–95 (TLLELGVSPIITSSMIFQFL) form a helical membrane-spanning segment. The Cytoplasmic portion of the chain corresponds to 96–119 (QGTQLLQIRPESKQDRELFQIAQK). Residues 120 to 141 (VCAIILILGQALVVVMTGNYGA) form a helical membrane-spanning segment. Residues 142–146 (PSDLG) lie on the Lumenal side of the membrane. A helical membrane pass occupies residues 147 to 167 (LPICLLLIFQLMFASLIVMLL). Over 168–212 (DELLSKGYGLGSGISLFTATNIAEQIFWRAFAPTTVNSGRGKEFE) the chain is Cytoplasmic. A helical transmembrane segment spans residues 213-224 (GAVIAFFHLLAV). Residues 225–240 (RKDKKRALVEAFYRTN) lie on the Lumenal side of the membrane. Residues 241 to 260 (LPNMFQVLMTVAIFLFVLYL) traverse the membrane as a helical segment. Over 261–290 (QGFRYELPIRSTKVRGQIGIYPIKLFYTSN) the chain is Cytoplasmic. Residues 291–311 (TPIMLQSALTSNIFLISQILF) form a helical membrane-spanning segment. The Lumenal portion of the chain corresponds to 312–361 (QKYPTNPLIRLIGVWGIRPGTQGPQMALSGLAYYIQPLMSLSEALLDPIK). The chain crosses the membrane as a helical span at residues 362 to 381 (TIVYITFVLGSCAVFSKTWI). The Cytoplasmic segment spans residues 382–416 (EISGTSPRDIAKQFKDQGMVINGKRETSIYRELKK). Residues 417–434 (IIPTAAAFGGATIGALSV) traverse the membrane as a helical segment. The Lumenal portion of the chain corresponds to 435–437 (GSD). A helical transmembrane segment spans residues 438-459 (LLGTLGSGASILMATTTIYGYY). Residues 460-480 (EAAAKEGGFTKNLVPGFSDLM) lie on the Cytoplasmic side of the membrane.

It belongs to the SecY/SEC61-alpha family. Component of the heterotrimeric Sec61 complex, which is composed of SEC61, SBH1 and SSS1. Presumably three to four Sec61 heterotrimers assemble into an oligomeric ring with a central aqueous pore. In cotranslational ER import, the pore diameter varies from 9-15 A in a ribosome-free resting state to 40-60 A in a functional state when associated with the ribosome. The Sec61 complex is part of a channel-forming translocon complex whose composition seem to change dependent upon different functional states. During post-translational ER import the Sec61 complex associates with the Sec62/63 complex to form the Sec complex. SEC61 interacts with STT3, OST1, OST2, OST4, SWP1 and WBP1 components of the OT complex.

Its subcellular location is the endoplasmic reticulum membrane. Functionally, part of the Sec61 complex, which is the major component of a channel-forming translocon complex that mediates protein translocation across the endoplasmic reticulum (ER). The functional states of the translocon complex include co- and post-translational ER import, cotranslational membrane protein integration and retrograde transport of misfolded proteins out of the ER. In the cotranslational pathway, ribosomes synthesizing presecretory proteins are targeted to the translocon by the cytosolic signal recognition particle (SRP) and its ER-localized receptor. The association of the Sec61 complex with the ribosome is mediated by the 28S rRNA of the large ribosomal subunit. SRP-independent post-translational translocation requires the association of additional factors, such as the Sec62/63 complex and KAR2. In an initial step, the signal sequence seems to bind simultaneously to SEC61 and SEC62. A cycle of assembly and disassembly of Sec62/63 complex from SEC61 may govern the activity of the translocon. SEC61 mediates the association with the ribosome. This Saccharomyces cerevisiae (strain ATCC 204508 / S288c) (Baker's yeast) protein is Protein transport protein SEC61 (SEC61).